Reading from the N-terminus, the 462-residue chain is Tryptophan dimethylallyltransferase ifgA (462 aa).

L-tryptophan contacts are provided by residues 83–84 (IL) and glutamate 92. Substrate-binding residues include arginine 103, lysine 189, and tyrosine 191. The L-tryptophan site is built by tyrosine 193 and arginine 246. Substrate contacts are provided by arginine 259, lysine 261, tyrosine 263, glutamine 345, and tyrosine 347.

Belongs to the tryptophan dimethylallyltransferase family. As to quaternary structure, homodimer.

It carries out the reaction L-tryptophan + dimethylallyl diphosphate = 4-(3-methylbut-2-enyl)-L-tryptophan + diphosphate. Its pathway is alkaloid biosynthesis; ergot alkaloid biosynthesis. In terms of biological role, tryptophan dimethylallyltransferase; part of the gene cluster that mediates the biosynthesis of isofumigaclavines, fungal ergot alkaloids. The tryptophan dimethylallyltransferase ifgA catalyzes the first step of ergot alkaloid biosynthesis by condensing dimethylallyl diphosphate (DMAP) and tryptophan to form 4-dimethylallyl-L-tryptophan. The second step is catalyzed by the methyltransferase ifgB that methylates 4-dimethylallyl-L-tryptophan in the presence of S-adenosyl-L-methionine, resulting in the formation of N-methyl-dimethylallyl-L-tryptophan. The catalase ifgD and the FAD-dependent oxidoreductase ifgC then transform N-methyl-dimethylallyl-L-tryptophan to chanoclavine-I which is further oxidized by ifgE in the presence of NAD(+), resulting in the formation of chanoclavine-I aldehyde. The chanoclavine-I aldehyde reductases ifgG and/or fgaOx3 reduce chanoclavine-I aldehyde to dihydrochanoclavine-I aldehyde that spontaneously dehydrates to form 6,8-dimethyl-6,7-didehydroergoline. The festuclavine dehydrogenases ifgF1 and/or ifgF2 then catalyze the reduction of 6,8-dimethyl-6,7-didehydroergoline to form festuclavine. Hydrolysis of festuclavine by a yet undetermined cytochrome P450 monooxygenase (called ifgH) then leads to the formation of isofumigaclavine B which is in turn acetylated by ifgI to isofumigaclavine A. Penicillium roqueforti has interestingly at least two sets of genes for the consumption of chanoclavine-I aldehyde on three different loci, the OYEs ifgG/fgaOx3 and the festuclavine synthase homologs ifgF1/ifgF2. The reason for the duplication of these genes is unclear, probably to ensure the conversion of chanoclavine-I aldehyde by differential gene expression under various environmental conditions. The protein is Tryptophan dimethylallyltransferase ifgA of Penicillium roqueforti (strain FM164).